A 90-amino-acid polypeptide reads, in one-letter code: Small ribosomal subunit protein uS15 (90 aa).

This sequence belongs to the universal ribosomal protein uS15 family. Part of the 30S ribosomal subunit. Forms a bridge to the 50S subunit in the 70S ribosome, contacting the 23S rRNA.

Functionally, one of the primary rRNA binding proteins, it binds directly to 16S rRNA where it helps nucleate assembly of the platform of the 30S subunit by binding and bridging several RNA helices of the 16S rRNA. Its function is as follows. Forms an intersubunit bridge (bridge B4) with the 23S rRNA of the 50S subunit in the ribosome. The sequence is that of Small ribosomal subunit protein uS15 from Helicobacter hepaticus (strain ATCC 51449 / 3B1).